Here is a 317-residue protein sequence, read N- to C-terminus: Malate dehydrogenase (317 aa).

NAD(+) is bound by residues 15–20 (GSGNIG) and aspartate 39. Positions 88 and 94 each coordinate substrate. NAD(+) contacts are provided by residues asparagine 101 and 124–126 (VTN). Residues asparagine 126 and arginine 157 each contribute to the substrate site. Histidine 181 functions as the Proton acceptor in the catalytic mechanism.

It belongs to the LDH/MDH superfamily. MDH type 3 family.

It carries out the reaction (S)-malate + NAD(+) = oxaloacetate + NADH + H(+). Functionally, catalyzes the reversible oxidation of malate to oxaloacetate. The sequence is that of Malate dehydrogenase from Ehrlichia ruminantium (strain Gardel).